We begin with the raw amino-acid sequence, 3579 residues long: Protocadherin-like wing polarity protein stan (3579 aa).

Positions 1 to 29 (MQTREFPQRPLGLLLVLLVVLLQSSLIKS) are cleaved as a signal peptide. The Extracellular portion of the chain corresponds to 30 to 2816 (YLIIVHEDTP…EPSLLVQITS (2787 aa)). N-linked (GlcNAc...) asparagine glycans are attached at residues Asn-46, Asn-179, and Asn-340. Cadherin domains lie at 360–464 (EQAL…SPTF), 465–581 (EAEQ…YPQF), 582–689 (SERT…APRF), 690–794 (YTSQ…DPAF), 795–897 (NPKY…APIF), 898–1007 (ENAP…APAF), 1008–1113 (KSPL…PPTF), and 1114–1220 (ASDK…APVL). Asn-671 carries an N-linked (GlcNAc...) asparagine glycan. Asn-886 is a glycosylation site (N-linked (GlcNAc...) asparagine). N-linked (GlcNAc...) asparagine glycans are attached at residues Asn-1269, Asn-1374, and Asn-1441. The EGF-like 1; calcium-binding domain occupies 1482 to 1518 (EVDLCYSDPCQNGGTCVRREGGYTCVCPSTHTGQNCE). 3 disulfide bridges follow: Cys-1486–Cys-1497, Cys-1491–Cys-1506, and Cys-1508–Cys-1517. Residues 1556-1753 (LRARAFGRNS…VADNGTLAGC (198 aa)) form the Laminin G-like 1 domain. Asn-1650, Asn-1678, and Asn-1747 each carry an N-linked (GlcNAc...) asparagine glycan. Disulfide bonds link Cys-1727–Cys-1753, Cys-1760–Cys-1771, Cys-1765–Cys-1780, and Cys-1782–Cys-1791. The EGF-like 2; calcium-binding domain maps to 1756–1792 (KAPLCQSEPCFNGGTCREGWGTYSCECPEGYAGNSCQ). In terms of domain architecture, Laminin G-like 2 spans 1796–1963 (PAPWRFSGDG…TIRENVEDGC (168 aa)). Asn-1843 is a glycosylation site (N-linked (GlcNAc...) asparagine). 4 cysteine pairs are disulfide-bonded: Cys-1937–Cys-1963, Cys-1969–Cys-1979, Cys-1973–Cys-1988, and Cys-1990–Cys-1999. The EGF-like 3; calcium-binding domain maps to 1965–2000 (SRAQCPDHCPNHSSCQSSWDLSTCECDSGYVGTDCA). Asn-1975 is a glycosylation site (N-linked (GlcNAc...) asparagine). N-linked (GlcNAc...) asparagine glycans are attached at residues Asn-2016, Asn-2028, Asn-2071, and Asn-2088. 4 cysteine pairs are disulfide-bonded: Cys-2092–Cys-2095, Cys-2097–Cys-2114, Cys-2116–Cys-2125, and Cys-2128–Cys-2140. The region spanning 2095-2142 (CDCYSIGSFSGACNPLTGQCECREGVIGRRCDSCSNPYAEVTLSGCEV) is the Laminin EGF-like domain. N-linked (GlcNAc...) asparagine glycosylation is found at Asn-2196 and Asn-2320. Positions 2553 to 2562 (QETQRLEIPS) are enriched in basic and acidic residues. Disordered stretches follow at residues 2553 to 2582 (QETQ…STEQ), 2610 to 2635 (HEIP…EREP), and 2654 to 2684 (VISP…GENE). The segment covering 2567-2579 (SSSSPSSSSSSGS) has biased composition (low complexity). In terms of domain architecture, GAIN-B spans 2653 to 2803 (EVISPDSPEM…AVIVDVIDPE (151 aa)). Disulfide bonds link Cys-2747–Cys-2785 and Cys-2762–Cys-2787. The segment at 2747–2803 (CVRWNSFTNQWTRLGCQTEIPDFDGDFNPAAQQAILVNCSCTHISSYAVIVDVIDPE) is GPS. Residue Asn-2784 is glycosylated (N-linked (GlcNAc...) asparagine). Residues 2817 to 2837 (YSAFLVSLPLLLGVLLALALL) form a helical membrane-spanning segment. At 2838-2845 (RGQQTNSN) the chain is on the cytoplasmic side. The chain crosses the membrane as a helical span at residues 2846–2866 (TIHQNIVLCVFCAELLFFVGM). The Extracellular portion of the chain corresponds to 2867–2883 (QSRRQLLESEFPCKLTA). A helical membrane pass occupies residues 2884–2904 (ICLHYFWLAAFAWTTVDCVHL). The Cytoplasmic portion of the chain corresponds to 2905-2919 (YRMLTEMRDINHGPM). Residues 2920-2940 (GFYFAMGYGAPAIVVGLSVGV) traverse the membrane as a helical segment. Residues 2941–2959 (RAHEYGNSLFCWLSVYEPV) are Extracellular-facing. Residues 2960–2980 (VWWLVGPIAGMSVVNLLILFV) traverse the membrane as a helical segment. Residues 2981–3000 (SVKAAFTLKDHVLGFGNLRT) are Cytoplasmic-facing. Residues 3001-3021 (LLWLSVVSLPLMGVMWVLAVL) form a helical membrane-spanning segment. Topologically, residues 3022 to 3031 (AASEHSQLLS) are extracellular. The helical transmembrane segment at 3032-3052 (LLLSGVVLLHALFCLIGYCII) threads the bilayer. Residues 3053 to 3579 (NKRVRENLQR…RNIDDDETTV (527 aa)) are Cytoplasmic-facing. 4 disordered regions span residues 3111 to 3225 (GISA…TPAY), 3343 to 3377 (LYGR…SGSQ), 3458 to 3486 (YHQQ…YHFP), and 3499 to 3579 (LSHT…ETTV). Residues 3113 to 3128 (SASSTTSRSTAKTSSS) show a composition bias toward low complexity. A compositionally biased stretch (basic and acidic residues) spans 3167–3191 (RGGEEKPSRRQRKDSDSGSETDGRS). Ser-3199 and Ser-3200 each carry phosphoserine. Residues 3208–3223 (ARSSGTHRSTAVSSTP) are compositionally biased toward polar residues. The segment covering 3343–3352 (LYGRRGEYPD) has biased composition (basic and acidic residues). The span at 3459–3468 (HQQQQQQQQH) shows a compositional bias: low complexity. Basic and acidic residues predominate over residues 3469–3482 (HLQDRLSEGSDKNG). Residues 3501–3513 (HTQPPSLHGSQLM) are compositionally biased toward polar residues.

Belongs to the G-protein coupled receptor 2 family. Interacts with ATP6AP2 (via N-terminus). In terms of tissue distribution, in the pupal wing, expressed at relatively even levels in all regions. Abundant in 6-9 hours embryos. Expressed at higher levels in pupae than larvae.

The protein localises to the cell membrane. It is found in the apical cell membrane. In terms of biological role, involved in the fz signaling pathway that controls wing tissue polarity. Also mediates homophilic cell adhesion. May play a role in initiating prehair morphogenesis. May play a critical role in tissue polarity and in formation of normal dendrite fields. During planar cell polarity, stabilizes asymmetric PCP domains together with ATP6AP2. The protein is Protocadherin-like wing polarity protein stan (stan) of Drosophila melanogaster (Fruit fly).